A 103-amino-acid polypeptide reads, in one-letter code: Nucleoid-associated protein SUN_2278 (103 aa).

It belongs to the YbaB/EbfC family. As to quaternary structure, homodimer.

The protein localises to the cytoplasm. It localises to the nucleoid. In terms of biological role, binds to DNA and alters its conformation. May be involved in regulation of gene expression, nucleoid organization and DNA protection. This chain is Nucleoid-associated protein SUN_2278, found in Sulfurovum sp. (strain NBC37-1).